The chain runs to 471 residues: Argininosuccinate lyase (471 aa).

The protein belongs to the lyase 1 family. Argininosuccinate lyase subfamily.

It is found in the cytoplasm. It catalyses the reaction 2-(N(omega)-L-arginino)succinate = fumarate + L-arginine. Its pathway is amino-acid biosynthesis; L-arginine biosynthesis; L-arginine from L-ornithine and carbamoyl phosphate: step 3/3. The polypeptide is Argininosuccinate lyase (Renibacterium salmoninarum (strain ATCC 33209 / DSM 20767 / JCM 11484 / NBRC 15589 / NCIMB 2235)).